The chain runs to 310 residues: uncharacterized protein (310 aa).

The tract at residues 1 to 70 (MAGNSQRRGA…ARGRTDETET (70 aa)) is disordered. Over residues 49–62 (AAKRAKAQQRRPAR) the composition is skewed to basic residues. S-adenosyl-L-methionine contacts are provided by Gly262, Val282, and Leu291.

The protein belongs to the class IV-like SAM-binding methyltransferase superfamily. RNA methyltransferase TrmH family.

This is an uncharacterized protein from Mycobacterium ulcerans (strain Agy99).